The sequence spans 202 residues: Histone chaperone ASF1B (202 aa).

The interval 1–156 (MAKVSVLNVA…TRFHINWDNN (156 aa)) is interaction with histone H3 and CHAF1B. Position 198 is a phosphoserine; by TLK2 (S198).

Belongs to the ASF1 family. In terms of assembly, interacts with histone H3 (via C-terminus), including histone H3.1, H3.2 and H3.3, and histone H4; the interaction with H3 is direct. Interacts with the CHAF1A, CHAF1B and RBBP4 subunits of the CAF-1 complex. Interacts with HAT1, NASP and TAF1. Found in a soluble complex with NASP and histones H3 and H4; the interaction with NASP is probably indirect and mediated by H3-H4. Interacts with CDAN1. Found in a cytosolic complex with CDAN1, ASF1A, IPO4 and histones H3.1 and H4. Interacts with CREBBP. Post-translationally, phosphorylated by TLK2. Phosphorylated by TLK1. As to expression, highly expressed in germ cells. Restricted to premeiotic to meiotic stages during spermatogenesis.

The protein localises to the nucleus. It is found in the cytoplasm. The protein resides in the cytosol. Functionally, histone chaperone that facilitates histone deposition and histone exchange and removal during nucleosome assembly and disassembly. Cooperates with chromatin assembly factor 1 (CAF-1) to promote replication-dependent chromatin assembly. Also involved in the nuclear import of the histone H3-H4 dimer together with importin-4 (IPO4): specifically recognizes and binds newly synthesized histones with the monomethylation of H3 'Lys-9' (H3K9me1) and diacetylation at 'Lys-5' and 'Lys-12' of H4 (H4K5ac and H4K12ac) marks in the cytosol. Does not participate in replication-independent nucleosome deposition which is mediated by ASF1A and HIRA. Required for gonad development. The chain is Histone chaperone ASF1B from Mus musculus (Mouse).